Consider the following 4499-residue polypeptide: Dynein alpha chain, flagellar outer arm (4499 aa).

A stem region spans residues 1 to 1677 (MSIFWEVPNA…RIRICDASFP (1677 aa)). Kelch repeat units lie at residues 29 to 84 (RFVL…ALDD), 86 to 135 (RLLV…RFGS), 137 to 183 (VFIF…RFDH), 199 to 245 (KLLI…VCDG), 253 to 304 (KVFS…FDVK), and 307 to 358 (SLLI…IRGL). Residues 425–534 (FANTAARNCI…IRGSPFTVKC (110 aa)) form a Filamin repeat. 2 Kelch repeats span residues 562-608 (ELVL…VLSD) and 610-661 (ELVV…AVSA). The segment at 653-720 (PKGAAAVSAE…SRPVSAKPAP (68 aa)) is disordered. The span at 655 to 689 (GAAAVSAEPSAEPAAEPAAEPAAEPDADAPAAEPA) shows a compositional bias: low complexity. Residues 690–705 (AEGEEGAVPAEGEEGA) are compositionally biased toward acidic residues. 2 Kelch repeats span residues 750-801 (LYVM…ATGN) and 864-913 (KLFL…TLSG). Coiled coils occupy residues 1261 to 1334 (ELHK…MIAN) and 1382 to 1450 (KKEL…RRAF). AAA stretches follow at residues 1678 to 1921 (YGYE…VLVV) and 1981 to 2225 (DVIV…KSYS). Residues 1716 to 1723 (GPAGTGKT) and 2019 to 2026 (GPTGTGRT) contribute to the ATP site. A Kelch 11 repeat occupies 2269–2317 (MIWAFGGGLVEKDGIPYRRNFDKWFKQTWTTVKIPGKGTVYDYFVNPKT). AAA regions lie at residues 2331–2577 (DYDG…VFQG) and 2679–2928 (EYNE…ERRY). 2369–2376 (GGAGVGKT) contributes to the ATP binding site. Residues 2655 to 2688 (LADKAYDEVADYTSLYKTLTEALNEYNETNAAMD) are a coiled coil. 2717 to 2724 (GVGGSGKQ) provides a ligand contact to ATP. A coiled-coil region spans residues 3003–3023 (VGVEKEKVNAENAAAQVEAEK). The segment at 3003–3262 (VGVEKEKVNA…ERWALTVEQL (260 aa)) is stalk. The Kelch 12 repeat unit spans residues 3070-3117 (LKKPPPGVDDITAVVIILLENNPKDKSWQAAQKLMNNVDKFLERVKSF). Coiled coils occupy residues 3170 to 3262 (DVVQ…VEQL) and 3486 to 3515 (NKERPDLEETKTQLIIQNTEFTIKLKELED). Residues 3320 to 3550 (LVDDALVAGW…AKRVSTEISE (231 aa)) are AAA 5. A disordered region spans residues 3614 to 3687 (GRKKGKGLKK…VGDAEDEDDE (74 aa)). The segment covering 3630-3653 (QPMDHQSLMEKARRSSGVGDRRPS) has biased composition (basic and acidic residues). Residues 3843–4082 (LQNFCEHMMG…LTTCGDVLYN (240 aa)) form an AAA 6 region.

It belongs to the dynein heavy chain family. Consists of at least 3 heavy chains (alpha, beta and gamma), 2 intermediate chains and 8 light chains.

Its subcellular location is the cell projection. It localises to the cilium. The protein localises to the flagellum. It is found in the cytoplasm. The protein resides in the cytoskeleton. Its subcellular location is the flagellum axoneme. Its function is as follows. Force generating protein of eukaryotic cilia and flagella. Produces force towards the minus ends of microtubules. Dynein has ATPase activity; the force-producing power stroke is thought to occur on release of ADP. The protein is Dynein alpha chain, flagellar outer arm (ODA11) of Chlamydomonas reinhardtii (Chlamydomonas smithii).